We begin with the raw amino-acid sequence, 135 residues long: Peptide methionine sulfoxide reductase MsrB (135 aa).

The MsrB domain occupies 13 to 135; sequence DADWREQLTP…NGHSMVFEPV (123 aa). Cys52, Cys55, Cys101, and Cys104 together coordinate Zn(2+). The active-site Nucleophile is Cys124.

This sequence belongs to the MsrB Met sulfoxide reductase family. It depends on Zn(2+) as a cofactor.

It carries out the reaction L-methionyl-[protein] + [thioredoxin]-disulfide + H2O = L-methionyl-(R)-S-oxide-[protein] + [thioredoxin]-dithiol. The sequence is that of Peptide methionine sulfoxide reductase MsrB from Agrobacterium fabrum (strain C58 / ATCC 33970) (Agrobacterium tumefaciens (strain C58)).